The primary structure comprises 490 residues: Betaine aldehyde dehydrogenase (490 aa).

Residues T26, I27, and D93 each coordinate K(+). 150-152 lines the NAD(+) pocket; sequence GAW. The active-site Charge relay system is the K162. 176–179 provides a ligand contact to NAD(+); that stretch reads KPSE. V180 is a K(+) binding site. Residue 230-233 participates in NAD(+) binding; the sequence is GVAS. Residue L246 coordinates K(+). E252 (proton acceptor) is an active-site residue. Positions 254, 286, and 387 each coordinate NAD(+). Residue C286 is the Nucleophile of the active site. C286 carries the cysteine sulfenic acid (-SOH) modification. Residues K457 and G460 each contribute to the K(+) site. E464 serves as the catalytic Charge relay system.

Belongs to the aldehyde dehydrogenase family. As to quaternary structure, dimer of dimers. Requires K(+) as cofactor.

It carries out the reaction betaine aldehyde + NAD(+) + H2O = glycine betaine + NADH + 2 H(+). It participates in amine and polyamine biosynthesis; betaine biosynthesis via choline pathway; betaine from betaine aldehyde: step 1/1. Functionally, involved in the biosynthesis of the osmoprotectant glycine betaine. Catalyzes the irreversible oxidation of betaine aldehyde to the corresponding acid. The chain is Betaine aldehyde dehydrogenase from Escherichia coli (strain K12 / DH10B).